The chain runs to 459 residues: Trichothecene 3-O-acetyltransferase TRI101 (459 aa).

Residues Asp-218 and Ile-221 each contribute to the Ca(2+) site. CoA contacts are provided by residues Lys-253, 266–269 (FVST), Asp-302, Gln-318, and Arg-343. Asp-376 provides a ligand contact to Ca(2+). Residues Ser-386 and Lys-390 each contribute to the CoA site. Glu-449 is a Ca(2+) binding site.

This sequence belongs to the trichothecene 3-O-acetyltransferase family.

It functions in the pathway sesquiterpene biosynthesis; trichothecene biosynthesis. Its function is as follows. 3-O-acetyltransferase involved in the biosynthesis of trichothecenes, a very large family of chemically related bicyclic sesquiterpene compounds acting as mycotoxins, including T2-toxin. The biosynthesis of trichothecenes begins with the cyclization of farnesyl diphosphate to trichodiene and is catalyzed by the trichodiene synthase TRI5. Trichodiene undergoes a series of oxygenations catalyzed by the cytochrome P450 monooxygenase TRI4. TRI4 controls the addition of four oxygens at C-2, C-3, C-11, and the C-12, C-13-epoxide to form the intermediate isotrichotriol. Isotrichotriol then undergoes a non-enzymatic isomerization and cyclization to form isotrichodermol. During this process, the oxygen at the C-2 position becomes the pyran ring oxygen and the hydroxyl group at C-11 is lost. More complex type A trichothecenes are built by modifying isotrichodermol through a series of paired hydroxylation and acetylation or acylation steps. Isotrichodermol is converted to isotrichodermin by the acetyltransferase TRI101. TRI101 encodes a C-3 transacetylase that acts as a self-protection or resistance factor during biosynthesis and that the presence of a free C-3 hydroxyl group is a key component of Fusarium trichothecene phytotoxicity. A second hydroxyl group is added to C-15 by the trichothecene C-15 hydroxylase TRI11, producing 15-decalonectrin, which is then acetylated by TRI3, producing calonectrin. A third hydroxyl group is added at C-4 by the cytochrome P450 monooxygenase TRI13, converting calonectrin to 3,15-diacetoxyspirpenol, which is subsequently acetylated bythe acetyltransferase TRI7. A fourth hydroxyl group is added to C-8 by the cytochrome P450 monooxygenase TRI1, followed by the addition of an isovaleryl moiety by TRI16. Finally, the acetyl group is removed from the C-3 position by the trichothecene C-3 esterase TRI8 to produce T-2 toxin. The chain is Trichothecene 3-O-acetyltransferase TRI101 from Fusarium sporotrichioides.